Here is a 292-residue protein sequence, read N- to C-terminus: ATP synthase gamma chain (292 aa).

The protein belongs to the ATPase gamma chain family. In terms of assembly, F-type ATPases have 2 components, CF(1) - the catalytic core - and CF(0) - the membrane proton channel. CF(1) has five subunits: alpha(3), beta(3), gamma(1), delta(1), epsilon(1). CF(0) has three main subunits: a, b and c.

It is found in the cell membrane. In terms of biological role, produces ATP from ADP in the presence of a proton gradient across the membrane. The gamma chain is believed to be important in regulating ATPase activity and the flow of protons through the CF(0) complex. This is ATP synthase gamma chain from Caldicellulosiruptor saccharolyticus (strain ATCC 43494 / DSM 8903 / Tp8T 6331).